A 204-amino-acid chain; its full sequence is Glycerol-3-phosphate acyltransferase (204 aa).

The next 5 helical transmembrane spans lie at 8-28 (ILIF…CYIF), 53-73 (VPAA…VVIA), 81-101 (FITA…IFFG), 116-136 (FGFS…VAII), and 155-175 (VIFT…IIIL).

This sequence belongs to the PlsY family. As to quaternary structure, probably interacts with PlsX.

Its subcellular location is the cell inner membrane. It carries out the reaction an acyl phosphate + sn-glycerol 3-phosphate = a 1-acyl-sn-glycero-3-phosphate + phosphate. Its pathway is lipid metabolism; phospholipid metabolism. Its function is as follows. Catalyzes the transfer of an acyl group from acyl-phosphate (acyl-PO(4)) to glycerol-3-phosphate (G3P) to form lysophosphatidic acid (LPA). This enzyme utilizes acyl-phosphate as fatty acyl donor, but not acyl-CoA or acyl-ACP. This chain is Glycerol-3-phosphate acyltransferase, found in Francisella tularensis subsp. tularensis (strain FSC 198).